The following is a 445-amino-acid chain: Rab GDP dissociation inhibitor beta (445 aa).

Met1 is subject to N-acetylmethionine. Lys57 is modified (N6-succinyllysine). N6-acetyllysine is present on Lys112. Ser130 carries the phosphoserine modification. Residue Lys269 is modified to N6-acetyllysine. Ser382 is modified (phosphoserine).

The protein belongs to the Rab GDI family. In terms of assembly, interacts with RHOH. Interacts with the GDP-bound inactive forms of RAB3A, RAB3B, RAB3C, RAB5A, RAB5B, RAB5C, RAB8A, RAB8B, RAB10, RAB12, RAB35, and RAB43; binds RAB3D to a lesser extent. Interacts with DZIP1; this interaction negatively regulates the interaction of GDI2 with GDP-bound RAB8A. As to expression, ubiquitously expressed.

Its subcellular location is the cytoplasm. It is found in the membrane. It localises to the golgi apparatus. The protein localises to the trans-Golgi network. GDP-dissociation inhibitor preventing the GDP to GTP exchange of most Rab proteins. By keeping these small GTPases in their inactive GDP-bound form regulates intracellular membrane trafficking. Negatively regulates protein transport to the cilium and ciliogenesis through the inhibition of RAB8A. The sequence is that of Rab GDP dissociation inhibitor beta (Gdi2) from Rattus norvegicus (Rat).